We begin with the raw amino-acid sequence, 218 residues long: Ribonuclease HII (218 aa).

The region spanning 22 to 211 (VRIAGVDEAG…VRAALESRFS (190 aa)) is the RNase H type-2 domain. 3 residues coordinate a divalent metal cation: Asp-28, Glu-29, and Asp-119.

It belongs to the RNase HII family. Mn(2+) serves as cofactor. Mg(2+) is required as a cofactor.

The protein resides in the cytoplasm. The enzyme catalyses Endonucleolytic cleavage to 5'-phosphomonoester.. In terms of biological role, endonuclease that specifically degrades the RNA of RNA-DNA hybrids. The sequence is that of Ribonuclease HII from Maricaulis maris (strain MCS10) (Caulobacter maris).